Consider the following 328-residue polypeptide: DNA-directed RNA polymerase subunit alpha (328 aa).

Residues 1 to 234 (MQGSVTEFLK…EQLDAFVDLR (234 aa)) are alpha N-terminal domain (alpha-NTD). Positions 248–328 (FDPILLRPVD…NWPPASIAED (81 aa)) are alpha C-terminal domain (alpha-CTD).

Belongs to the RNA polymerase alpha chain family. In terms of assembly, homodimer. The RNAP catalytic core consists of 2 alpha, 1 beta, 1 beta' and 1 omega subunit. When a sigma factor is associated with the core the holoenzyme is formed, which can initiate transcription.

It catalyses the reaction RNA(n) + a ribonucleoside 5'-triphosphate = RNA(n+1) + diphosphate. Its function is as follows. DNA-dependent RNA polymerase catalyzes the transcription of DNA into RNA using the four ribonucleoside triphosphates as substrates. The sequence is that of DNA-directed RNA polymerase subunit alpha from Haemophilus influenzae (strain PittEE).